The following is a 328-amino-acid chain: tRNA uridine(34) hydroxylase (328 aa).

One can recognise a Rhodanese domain in the interval 130–224 (LDKDTVVLDT…YGKDPEVQGE (95 aa)). The active-site Cysteine persulfide intermediate is Cys-184.

This sequence belongs to the TrhO family.

The enzyme catalyses uridine(34) in tRNA + AH2 + O2 = 5-hydroxyuridine(34) in tRNA + A + H2O. In terms of biological role, catalyzes oxygen-dependent 5-hydroxyuridine (ho5U) modification at position 34 in tRNAs. This chain is tRNA uridine(34) hydroxylase, found in Streptococcus pneumoniae serotype 19F (strain G54).